The sequence spans 492 residues: Cytochrome P450 26A1 (492 aa).

Cys438 is a heme binding site.

This sequence belongs to the cytochrome P450 family. The cofactor is heme.

It localises to the endoplasmic reticulum membrane. The protein localises to the microsome membrane. It carries out the reaction all-trans-retinoate + reduced [NADPH--hemoprotein reductase] + O2 = all-trans-(4S)-hydroxyretinoate + oxidized [NADPH--hemoprotein reductase] + H2O + H(+). In terms of biological role, a cytochrome P450 monooxygenase involved in the metabolism of all-trans retinoic acid (atRA), a signaling molecule that binds to retinoic acid receptors and regulates gene transcription. Mechanistically, uses molecular oxygen inserting one oxygen atom into a substrate, and reducing the second into a water molecule, with two electrons provided by NADPH via cytochrome P450 reductase (CPR; NADPH-ferrihemoprotein reductase). Catalyzes the hydroxylation of carbon hydrogen bonds of atRA primarily at C-4. Has no activity toward 9-cis and 13-cis retinoic acid stereoisomers. May play a role in the oxidative metabolism of xenobiotics such as tazarotenic acid. This is Cytochrome P450 26A1 (cyp26a1) from Danio rerio (Zebrafish).